The primary structure comprises 206 residues: Uridine kinase (206 aa).

Position 11 to 18 (11 to 18 (GGSASGKT)) interacts with ATP.

This sequence belongs to the uridine kinase family.

It localises to the cytoplasm. It carries out the reaction uridine + ATP = UMP + ADP + H(+). It catalyses the reaction cytidine + ATP = CMP + ADP + H(+). It functions in the pathway pyrimidine metabolism; CTP biosynthesis via salvage pathway; CTP from cytidine: step 1/3. The protein operates within pyrimidine metabolism; UMP biosynthesis via salvage pathway; UMP from uridine: step 1/1. This Lactococcus lactis subsp. cremoris (strain MG1363) protein is Uridine kinase.